Reading from the N-terminus, the 208-residue chain is uncharacterized protein (208 aa).

This is an uncharacterized protein from Legionella pneumophila subsp. pneumophila (strain Philadelphia 1 / ATCC 33152 / DSM 7513).